Reading from the N-terminus, the 243-residue chain is uncharacterized protein (243 aa).

This is an uncharacterized protein from Methanocaldococcus jannaschii (strain ATCC 43067 / DSM 2661 / JAL-1 / JCM 10045 / NBRC 100440) (Methanococcus jannaschii).